Reading from the N-terminus, the 219-residue chain is Mediator of RNA polymerase II transcription subunit 20b (219 aa).

The protein belongs to the Mediator complex subunit 20 family. Component of the Mediator complex.

It localises to the nucleus. In terms of biological role, component of the Mediator complex, a coactivator involved in the regulated transcription of nearly all RNA polymerase II-dependent genes. Mediator functions as a bridge to convey information from gene-specific regulatory proteins to the basal RNA polymerase II transcription machinery. The Mediator complex, having a compact conformation in its free form, is recruited to promoters by direct interactions with regulatory proteins and serves for the assembly of a functional preinitiation complex with RNA polymerase II and the general transcription factors. The protein is Mediator of RNA polymerase II transcription subunit 20b (MED20B) of Arabidopsis thaliana (Mouse-ear cress).